The primary structure comprises 417 residues: NADH-quinone oxidoreductase subunit D (417 aa).

The protein belongs to the complex I 49 kDa subunit family. As to quaternary structure, NDH-1 is composed of 14 different subunits. Subunits NuoB, C, D, E, F, and G constitute the peripheral sector of the complex.

The protein resides in the cell inner membrane. It catalyses the reaction a quinone + NADH + 5 H(+)(in) = a quinol + NAD(+) + 4 H(+)(out). In terms of biological role, NDH-1 shuttles electrons from NADH, via FMN and iron-sulfur (Fe-S) centers, to quinones in the respiratory chain. The immediate electron acceptor for the enzyme in this species is believed to be ubiquinone. Couples the redox reaction to proton translocation (for every two electrons transferred, four hydrogen ions are translocated across the cytoplasmic membrane), and thus conserves the redox energy in a proton gradient. The chain is NADH-quinone oxidoreductase subunit D from Nitrosococcus oceani (strain ATCC 19707 / BCRC 17464 / JCM 30415 / NCIMB 11848 / C-107).